The following is a 559-amino-acid chain: Potassium-transporting ATPase potassium-binding subunit (559 aa).

13 helical membrane passes run 5 to 25 (GFLL…PLGS), 27 to 47 (LARL…RILW), 63 to 83 (LLAL…LLFW), 132 to 152 (GLTV…FALI), 170 to 190 (LVRI…LFFI), 253 to 273 (LAQM…FGEA), 283 to 303 (LLWA…WAEV), 327 to 347 (FGVL…CGAV), 356 to 376 (ALGG…FGGV), 379 to 399 (GLYG…LMIG), 416 to 436 (MTAL…ALAM), 484 to 504 (LLAF…MAIA), and 524 to 544 (GALF…LTFI).

This sequence belongs to the KdpA family. In terms of assembly, the system is composed of three essential subunits: KdpA, KdpB and KdpC.

The protein resides in the cell inner membrane. In terms of biological role, part of the high-affinity ATP-driven potassium transport (or Kdp) system, which catalyzes the hydrolysis of ATP coupled with the electrogenic transport of potassium into the cytoplasm. This subunit binds the periplasmic potassium ions and delivers the ions to the membrane domain of KdpB through an intramembrane tunnel. The polypeptide is Potassium-transporting ATPase potassium-binding subunit (Salmonella heidelberg (strain SL476)).